A 367-amino-acid chain; its full sequence is Di-N-acetylchitobiase (367 aa).

The signal sequence occupies residues 1–23 (MALSDLLELTLLLLLPLLERLSA). In terms of domain architecture, GH18 spans 24–367 (EDCPCSEASL…EMWGALRPRL (344 aa)). The active-site Proton donor is the Glu128. N-linked (GlcNAc...) asparagine glycosylation is found at Asn178, Asn213, Asn247, and Asn284.

The protein belongs to the glycosyl hydrolase 18 family.

It localises to the lysosome. Its function is as follows. Involved in the degradation of asparagine-linked glycoproteins. Hydrolyze of N-acetyl-beta-D-glucosamine (1-4)N-acetylglucosamine chitobiose core from the reducing end of the bond, it requires prior cleavage by glycosylasparaginase. This chain is Di-N-acetylchitobiase (Ctbs), found in Rattus norvegicus (Rat).